Reading from the N-terminus, the 384-residue chain is Dual-specificity RNA methyltransferase RlmN (384 aa).

Glu-93 (proton acceptor) is an active-site residue. Positions 99 to 339 constitute a Radical SAM core domain; sequence EETRGTLCVS…TTIRKTRGDD (241 aa). Cysteines 106 and 344 form a disulfide. The [4Fe-4S] cluster site is built by Cys-113, Cys-117, and Cys-120. Residues 170–171, Ser-202, 224–226, and Asn-301 contribute to the S-adenosyl-L-methionine site; these read GE and SLH. Catalysis depends on Cys-344, which acts as the S-methylcysteine intermediate.

It belongs to the radical SAM superfamily. RlmN family. It depends on [4Fe-4S] cluster as a cofactor.

The protein resides in the cytoplasm. It carries out the reaction adenosine(2503) in 23S rRNA + 2 reduced [2Fe-2S]-[ferredoxin] + 2 S-adenosyl-L-methionine = 2-methyladenosine(2503) in 23S rRNA + 5'-deoxyadenosine + L-methionine + 2 oxidized [2Fe-2S]-[ferredoxin] + S-adenosyl-L-homocysteine. It catalyses the reaction adenosine(37) in tRNA + 2 reduced [2Fe-2S]-[ferredoxin] + 2 S-adenosyl-L-methionine = 2-methyladenosine(37) in tRNA + 5'-deoxyadenosine + L-methionine + 2 oxidized [2Fe-2S]-[ferredoxin] + S-adenosyl-L-homocysteine. Specifically methylates position 2 of adenine 2503 in 23S rRNA and position 2 of adenine 37 in tRNAs. m2A2503 modification seems to play a crucial role in the proofreading step occurring at the peptidyl transferase center and thus would serve to optimize ribosomal fidelity. This Cupriavidus pinatubonensis (strain JMP 134 / LMG 1197) (Cupriavidus necator (strain JMP 134)) protein is Dual-specificity RNA methyltransferase RlmN.